We begin with the raw amino-acid sequence, 61 residues long: Alpha-conotoxin-like Sm1.1 (61 aa).

A signal peptide spans 1–16; that stretch reads MFTVFLLVVLATTVVS. Residues 17–43 constitute a propeptide that is removed on maturation; that stretch reads FPSDRASDGRDDEAKDERSDMHESGRK. The tract at residues 19 to 46 is disordered; the sequence is SDRASDGRDDEAKDERSDMHESGRKGRG. Positions 21–42 are enriched in basic and acidic residues; it reads RASDGRDDEAKDERSDMHESGR. 2 cysteine pairs are disulfide-bonded: C48/C53 and C49/C59. At P55 the chain carries 4-hydroxyproline; partial. Cysteine amide is present on C59.

It belongs to the conotoxin A superfamily. As to expression, expressed by the venom duct.

Its subcellular location is the secreted. Its function is as follows. Alpha-conotoxins act on postsynaptic membranes, they bind to the nicotinic acetylcholine receptors (nAChR) and thus inhibit them. This Conus stercusmuscarum (Fly-specked cone) protein is Alpha-conotoxin-like Sm1.1.